We begin with the raw amino-acid sequence, 302 residues long: Putative gluconeogenesis factor (302 aa).

It belongs to the gluconeogenesis factor family.

Its subcellular location is the cytoplasm. In terms of biological role, required for morphogenesis under gluconeogenic growth conditions. This Salmonella typhi protein is Putative gluconeogenesis factor (ybhK).